The following is a 300-amino-acid chain: Acetylglutamate kinase (300 aa).

Substrate-binding positions include Gly73 to Gly74, Arg95, and Asn197.

This sequence belongs to the acetylglutamate kinase family. ArgB subfamily.

It localises to the cytoplasm. It catalyses the reaction N-acetyl-L-glutamate + ATP = N-acetyl-L-glutamyl 5-phosphate + ADP. The protein operates within amino-acid biosynthesis; L-arginine biosynthesis; N(2)-acetyl-L-ornithine from L-glutamate: step 2/4. Functionally, catalyzes the ATP-dependent phosphorylation of N-acetyl-L-glutamate. In Bordetella avium (strain 197N), this protein is Acetylglutamate kinase.